A 243-amino-acid chain; its full sequence is Peptidyl-tRNA hydrolase (243 aa).

Position 14 (Y14) interacts with tRNA. H19 functions as the Proton acceptor in the catalytic mechanism. TRNA-binding residues include F64, N66, and N112. The tract at residues 184–225 (AAQTRPAEKAKPLATAKPKEGEARTSGGSVAEVGAPPPSPTG) is disordered. Over residues 189-206 (PAEKAKPLATAKPKEGEA) the composition is skewed to basic and acidic residues.

It belongs to the PTH family. Monomer.

The protein localises to the cytoplasm. It catalyses the reaction an N-acyl-L-alpha-aminoacyl-tRNA + H2O = an N-acyl-L-amino acid + a tRNA + H(+). In terms of biological role, hydrolyzes ribosome-free peptidyl-tRNAs (with 1 or more amino acids incorporated), which drop off the ribosome during protein synthesis, or as a result of ribosome stalling. Functionally, catalyzes the release of premature peptidyl moieties from peptidyl-tRNA molecules trapped in stalled 50S ribosomal subunits, and thus maintains levels of free tRNAs and 50S ribosomes. This is Peptidyl-tRNA hydrolase from Rhodospirillum rubrum (strain ATCC 11170 / ATH 1.1.1 / DSM 467 / LMG 4362 / NCIMB 8255 / S1).